Consider the following 354-residue polypeptide: Uroporphyrinogen decarboxylase (354 aa).

Substrate-binding positions include 27-31, aspartate 77, tyrosine 154, threonine 209, and histidine 327; that span reads RQAGR.

Belongs to the uroporphyrinogen decarboxylase family. Homodimer.

The protein localises to the cytoplasm. It carries out the reaction uroporphyrinogen III + 4 H(+) = coproporphyrinogen III + 4 CO2. Its pathway is porphyrin-containing compound metabolism; protoporphyrin-IX biosynthesis; coproporphyrinogen-III from 5-aminolevulinate: step 4/4. Its function is as follows. Catalyzes the decarboxylation of four acetate groups of uroporphyrinogen-III to yield coproporphyrinogen-III. This chain is Uroporphyrinogen decarboxylase, found in Pectobacterium atrosepticum (strain SCRI 1043 / ATCC BAA-672) (Erwinia carotovora subsp. atroseptica).